Here is a 96-residue protein sequence, read N- to C-terminus: Large ribosomal subunit protein eL43 (96 aa).

The C4-type zinc-finger motif lies at 41 to 62; that stretch reads CPVCAFPKLKRAGTSIWVCDKC.

The protein belongs to the eukaryotic ribosomal protein eL43 family. It depends on Zn(2+) as a cofactor.

The polypeptide is Large ribosomal subunit protein eL43 (Methanococcus vannielii (strain ATCC 35089 / DSM 1224 / JCM 13029 / OCM 148 / SB)).